The primary structure comprises 330 residues: Tryptophan--tRNA ligase (330 aa).

ATP is bound by residues glutamine 9–threonine 11 and glycine 17–asparagine 18. The 'HIGH' region signature appears at proline 10 to asparagine 18. Aspartate 136 contacts L-tryptophan. Residues glycine 148–aspartate 150, isoleucine 187, and lysine 195–serine 199 each bind ATP. The short motif at lysine 195–serine 199 is the 'KMSKS' region element.

This sequence belongs to the class-I aminoacyl-tRNA synthetase family. As to quaternary structure, homodimer.

It localises to the cytoplasm. The catalysed reaction is tRNA(Trp) + L-tryptophan + ATP = L-tryptophyl-tRNA(Trp) + AMP + diphosphate + H(+). Its function is as follows. Catalyzes the attachment of tryptophan to tRNA(Trp). In Deinococcus radiodurans (strain ATCC 13939 / DSM 20539 / JCM 16871 / CCUG 27074 / LMG 4051 / NBRC 15346 / NCIMB 9279 / VKM B-1422 / R1), this protein is Tryptophan--tRNA ligase.